A 179-amino-acid chain; its full sequence is Probable WRKY transcription factor 24 (179 aa).

The segment at residues 92 to 157 (SDDDVLDDGY…YEGVHNHPCE (66 aa)) is a DNA-binding region (WRKY).

Belongs to the WRKY group II-c family.

It localises to the nucleus. In terms of biological role, transcription factor. Interacts specifically with the W box (5'-(T)TGAC[CT]-3'), a frequently occurring elicitor-responsive cis-acting element. The chain is Probable WRKY transcription factor 24 (WRKY24) from Arabidopsis thaliana (Mouse-ear cress).